The sequence spans 361 residues: DNA replication and repair protein RecF (361 aa).

30-37 contributes to the ATP binding site; sequence GPNGSGKT.

The protein belongs to the RecF family.

It is found in the cytoplasm. Functionally, the RecF protein is involved in DNA metabolism; it is required for DNA replication and normal SOS inducibility. RecF binds preferentially to single-stranded, linear DNA. It also seems to bind ATP. This chain is DNA replication and repair protein RecF, found in Yersinia pseudotuberculosis serotype IB (strain PB1/+).